Consider the following 209-residue polypeptide: Max dimerization protein 4 (209 aa).

An interaction with SIN3A and SIN3B region spans residues 6 to 23; sequence LLILLEAAEYLERRDREA. The 53-residue stretch at 53 to 105 folds into the bHLH domain; that stretch reads NNRSSHNELEKHRRAKLRLYLEQLKQLVPLGPDSTRHTTLSLLKRAKVHIKKL. The segment at 140 to 209 is disordered; the sequence is RVRTDSTGSA…CRRLGRPALS (70 aa). Over residues 153–163 the composition is skewed to acidic residues; the sequence is DDSEQEVDIEG. Positions 199-209 are enriched in basic residues; sequence HCRRLGRPALS.

As to quaternary structure, efficient DNA binding requires dimerization with another bHLH protein. Binds DNA as a heterodimer with MAX. Interacts with SIN3A AND SIN3B. Interacts with RNF17.

The protein localises to the nucleus. Its function is as follows. Transcriptional repressor. Binds with MAX to form a sequence-specific DNA-binding protein complex which recognizes the core sequence 5'-CAC[GA]TG-3'. Antagonizes MYC transcriptional activity by competing for MAX and suppresses MYC dependent cell transformation. The protein is Max dimerization protein 4 (MXD4) of Homo sapiens (Human).